The following is a 661-amino-acid chain: UvrABC system protein B (661 aa).

In terms of domain architecture, Helicase ATP-binding spans alanine 25–arginine 182. Position 38 to 45 (glycine 38 to threonine 45) interacts with ATP. The Beta-hairpin signature appears at tyrosine 91 to isoleucine 114. In terms of domain architecture, Helicase C-terminal spans glutamine 430–isoleucine 592. Residues lysine 621 to alanine 656 enclose the UVR domain.

It belongs to the UvrB family. Forms a heterotetramer with UvrA during the search for lesions. Interacts with UvrC in an incision complex.

It localises to the cytoplasm. The UvrABC repair system catalyzes the recognition and processing of DNA lesions. A damage recognition complex composed of 2 UvrA and 2 UvrB subunits scans DNA for abnormalities. Upon binding of the UvrA(2)B(2) complex to a putative damaged site, the DNA wraps around one UvrB monomer. DNA wrap is dependent on ATP binding by UvrB and probably causes local melting of the DNA helix, facilitating insertion of UvrB beta-hairpin between the DNA strands. Then UvrB probes one DNA strand for the presence of a lesion. If a lesion is found the UvrA subunits dissociate and the UvrB-DNA preincision complex is formed. This complex is subsequently bound by UvrC and the second UvrB is released. If no lesion is found, the DNA wraps around the other UvrB subunit that will check the other stand for damage. This is UvrABC system protein B from Rickettsia peacockii (strain Rustic).